A 985-amino-acid chain; its full sequence is MAGLKSFLASSWLLPVACGASQSIVPSTSATAAYSQFTIPASADVGANLVANIDDPQAVNAQSVCPGYKASDVKHSSQGFTASLELAGDPCNVYGTDVDSLTLTVEYQAKDRLNIQIVPTYFDASNASWYILSEELVPRPKASQNASVPQSDFVVSWSNEPSFNFKVIRKATGDVLFNTKGSTLVYENQFIEFVTLLPEEYNLYGLGERMNQLRLLENANLTLYAADIADPIDDNIYGHHAFYLDTRYYKVGGQNKSHTIVKSSEAEPSQEYVSYSHGVFLRNAHGQEILLRDQKLIWRTLGGSVDLTFYSGPTQAEVTKQYQLSTVGLPAMQQYNTLGFHQCRWGYNNWSEFEDVLANFERFEIPLEYLWADIDYMHGYRNFDNDQHRFSYEEGEKFLNKLHAGGRRWVPIVDGALYIPNPENASDAYETYDRGAKDDVFIKNPDGSLYIGAVWPGYTVYPDWHHPKASDFWANELVTWWNKLHYDGVWYDMAEVSSFCVGSCGTGNLSMNPAHPPFALPGEPGNVVYDYPEGFNITNATEAASASAGAASQSAAASSTTTSAPYLRTTPTPGVRNVDHPPYVINHVQPGHDLSVHAISPNSTHSDGVQEYDVHSLYGHQGINATYHGLLKVWENKRPFIIARSTFSGSGKWAGHWGGDNFSKWGSMFFSISQALQFSLFGIPMFGVDTCGFNGNTDEELCNRWMQLSAFFPFYRNHNVLSAIPQEPYRWASVIDATKAAMNIRYAILPYFYTLFHLAHTTGSTVMRALAWEFPNDPSLAAVGTQFLVGPSVMVIPVLEPQVDTVQGVFPGVGHGEVWYDWYSQTAVDAKPGVNTTISAPLGHIPVFVRGGSILPMQEVALTTRDARKTPWSLLASLSSNGTASGQLYLDDGESVYPEDTLSVDFLASRSTLRASARGTWKEANPLANVTVLGVTEKPSSVTLNGETLSSDSVKYNATSHVLHVGGLQKHTADGAWAKDWVLKW.

The signal sequence occupies residues Met-1–Val-25. N-linked (GlcNAc...) asparagine glycans are attached at residues Asn-126, Asn-145, Asn-220, Asn-255, Asn-349, and Asn-424. Residue Asp-492 is the Nucleophile of the active site. Glu-495 is an active-site residue. 5 N-linked (GlcNAc...) asparagine glycosylation sites follow: Asn-508, Asn-536, Asn-539, Asn-602, and Asn-624. Asp-660 serves as the catalytic Proton donor. N-linked (GlcNAc...) asparagine glycans are attached at residues Asn-661, Asn-835, Asn-881, Asn-929, and Asn-957.

It belongs to the glycosyl hydrolase 31 family.

The enzyme catalyses Hydrolysis of terminal, non-reducing (1-&gt;4)-linked alpha-D-glucose residues with release of alpha-D-glucose.. Hydrolyzes malto-oligosaccharides, but has a low activity toward soluble starch. The chain is Alpha-glucosidase (agdA) from Aspergillus oryzae (strain ATCC 42149 / RIB 40) (Yellow koji mold).